We begin with the raw amino-acid sequence, 96 residues long: DNA-directed RNA polymerase subunit Rpo11 (96 aa).

The protein belongs to the archaeal Rpo11/eukaryotic RPB11/RPC19 RNA polymerase subunit family. Part of the RNA polymerase complex.

The protein resides in the cytoplasm. It catalyses the reaction RNA(n) + a ribonucleoside 5'-triphosphate = RNA(n+1) + diphosphate. Functionally, DNA-dependent RNA polymerase (RNAP) catalyzes the transcription of DNA into RNA using the four ribonucleoside triphosphates as substrates. The protein is DNA-directed RNA polymerase subunit Rpo11 of Methanococcus maripaludis (strain C5 / ATCC BAA-1333).